The primary structure comprises 181 residues: Putative D-tyrosyl-tRNA(Tyr) deacylase 2 (181 aa).

The protein belongs to the DTD family. Highly divergent. Homodimer.

Its subcellular location is the cytoplasm. In terms of biological role, may hydrolyze D-tyrosyl-tRNA(Tyr) into D-tyrosine and free tRNA(Tyr). Could be a defense mechanism against a harmful effect of D-tyrosine. The protein is Putative D-tyrosyl-tRNA(Tyr) deacylase 2 of Leishmania major.